The chain runs to 378 residues: tRNA-specific 2-thiouridylase MnmA (378 aa).

ATP-binding positions include 9-16 (GVSGGVDS) and M35. The tract at residues 94–96 (NPD) is interaction with target base in tRNA. The active-site Nucleophile is C99. An intrachain disulfide couples C99 to C195. G123 contributes to the ATP binding site. Residues 145–147 (KDQ) form an interaction with tRNA region. C195 functions as the Cysteine persulfide intermediate in the catalytic mechanism. The interval 307–308 (RY) is interaction with tRNA.

The protein belongs to the MnmA/TRMU family.

Its subcellular location is the cytoplasm. It carries out the reaction S-sulfanyl-L-cysteinyl-[protein] + uridine(34) in tRNA + AH2 + ATP = 2-thiouridine(34) in tRNA + L-cysteinyl-[protein] + A + AMP + diphosphate + H(+). In terms of biological role, catalyzes the 2-thiolation of uridine at the wobble position (U34) of tRNA, leading to the formation of s(2)U34. The protein is tRNA-specific 2-thiouridylase MnmA of Xanthomonas oryzae pv. oryzae (strain MAFF 311018).